Here is an 87-residue protein sequence, read N- to C-terminus: MNSKVFAVLLLLALLTCVLSEKYCPTPRNTSCKKMNIRNNCCRDSDCTSNAFCCAEPCGNFCHKASDKPGGRRVDPNASCQTGYVYW.

Residues 1-20 form the signal peptide; that stretch reads MNSKVFAVLLLLALLTCVLS. The region spanning 21 to 66 is the WAP domain; sequence EKYCPTPRNTSCKKMNIRNNCCRDSDCTSNAFCCAEPCGNFCHKAS. 5 disulfide bridges follow: Cys24–Cys54, Cys32–Cys58, Cys41–Cys53, Cys42–Cys80, and Cys47–Cys62.

It belongs to the venom protein 11 family. 01 (wap-1) subfamily. Contains 5 disulfide bonds. As to expression, expressed by the venom gland.

The protein resides in the secreted. Functionally, has antibacterial activity. The polypeptide is U14-lycotoxin-Ls1a (Lycosa singoriensis (Wolf spider)).